Here is a 126-residue protein sequence, read N- to C-terminus: Large ribosomal subunit protein bL19 (126 aa).

Belongs to the bacterial ribosomal protein bL19 family.

Its function is as follows. This protein is located at the 30S-50S ribosomal subunit interface and may play a role in the structure and function of the aminoacyl-tRNA binding site. This Nitrobacter winogradskyi (strain ATCC 25391 / DSM 10237 / CIP 104748 / NCIMB 11846 / Nb-255) protein is Large ribosomal subunit protein bL19.